Here is a 461-residue protein sequence, read N- to C-terminus: Glycolipid 2-alpha-mannosyltransferase 2 (461 aa).

Residues 1–12 (MKPSIFYSSRQP) lie on the Cytoplasmic side of the membrane. The chain crosses the membrane as a helical; Signal-anchor for type II membrane protein span at residues 13–35 (YLKYLAIILTTITIYVLTHSSYS). Residues 35–52 (SADPNINDVTTKPISETV) are compositionally biased toward polar residues. Residues 35–138 (SADPNINDVT…SSSKDPVKPE (104 aa)) form a disordered region. The Lumenal portion of the chain corresponds to 36 to 461 (ADPNINDVTT…QKPKEWEKYQ (426 aa)). Low complexity-rich tracts occupy residues 61-70 (SSPEQQQQQP) and 106-116 (PKSSSSSPQQQ). Residues 117 to 126 (EKQDTKKESE) are compositionally biased toward basic and acidic residues. The active-site Nucleophile is the Glu349.

Belongs to the glycosyltransferase 15 family.

The protein localises to the golgi apparatus membrane. Its function is as follows. Involved in O-glycosylation of cell wall and secreted proteins. Transfers an alpha-D-mannosyl residue from GDP-mannose into lipid-linked oligosaccharide, forming an alpha-(1-&gt;2)-D-mannosyl-D-mannose linkage. Mainly responsible for the addition of the third mannose residue in an O-linked mannose pentamer. Can also substitute for MNT1 by adding the second mannose residue. Important for adherence to host surfaces and for virulence. The sequence is that of Glycolipid 2-alpha-mannosyltransferase 2 (MNT2) from Candida albicans (strain SC5314 / ATCC MYA-2876) (Yeast).